The primary structure comprises 609 residues: Isocitrate dehydrogenase kinase/phosphatase (609 aa).

ATP contacts are provided by residues 325 to 331 (APGIKGM) and K346. D381 is an active-site residue.

Belongs to the AceK family.

It is found in the cytoplasm. It catalyses the reaction L-seryl-[isocitrate dehydrogenase] + ATP = O-phospho-L-seryl-[isocitrate dehydrogenase] + ADP + H(+). In terms of biological role, bifunctional enzyme which can phosphorylate or dephosphorylate isocitrate dehydrogenase (IDH) on a specific serine residue. This is a regulatory mechanism which enables bacteria to bypass the Krebs cycle via the glyoxylate shunt in response to the source of carbon. When bacteria are grown on glucose, IDH is fully active and unphosphorylated, but when grown on acetate or ethanol, the activity of IDH declines drastically concomitant with its phosphorylation. This Acidovorax sp. (strain JS42) protein is Isocitrate dehydrogenase kinase/phosphatase.